Reading from the N-terminus, the 300-residue chain is Coatomer subunit epsilon (300 aa).

This sequence belongs to the COPE family. As to quaternary structure, oligomeric complex that consists of at least the alpha, beta, beta', gamma, delta, epsilon and zeta subunits.

It is found in the cytoplasm. The protein resides in the golgi apparatus membrane. Its subcellular location is the cytoplasmic vesicle. The protein localises to the COPI-coated vesicle membrane. In terms of biological role, the coatomer is a cytosolic protein complex that binds to dilysine motifs and reversibly associates with Golgi non-clathrin-coated vesicles, which further mediate biosynthetic protein transport from the ER, via the Golgi up to the trans Golgi network. The coatomer complex is required for budding from Golgi membranes, and is essential for the retrograde Golgi-to-ER transport of dilysine-tagged proteins. This Dictyostelium discoideum (Social amoeba) protein is Coatomer subunit epsilon (cope).